The primary structure comprises 1752 residues: Chitin synthase E (1752 aa).

1–8 contributes to the ATP binding site; it reads GESGSGKT. Residues 492-520 form a disordered region; that stretch reads SSKPLRMPSMARRKTSPSSRLAFDAGDAD. The actin-binding stretch occupies residues 558–582; sequence LDIVNKCLSSTNLNPYFIFCLKPND. 2 consecutive transmembrane segments (helical) span residues 789–809 and 828–848; these read WIAL…KLFG and LIIW…PGLV. The region spanning 852–940 is the Cytochrome b5 heme-binding domain; it reads QHVYSAAELS…LLDYRPTNIS (89 aa). N-linked (GlcNAc...) asparagine glycosylation is found at Asn938 and Asn963. Residues 1099 to 1119 form a helical membrane-spanning segment; that stretch reads FILAISVLICSIIVFKFLAAL. Asn1322, Asn1356, and Asn1462 each carry an N-linked (GlcNAc...) asparagine glycan. A run of 3 helical transmembrane segments spans residues 1494–1514, 1520–1540, and 1547–1567; these read LSTV…YWLV, IPYT…LIFI, and MVGW…PCPS. Residue Asn1685 is glycosylated (N-linked (GlcNAc...) asparagine). A DEK-C domain is found at 1689 to 1744; the sequence is LPSDDAILAEIREILRTADLMSVTKKSIKLELERAFGVNLDLKRPYINSGKGYTFP.

This sequence in the N-terminal section; belongs to the TRAFAC class myosin-kinesin ATPase superfamily. Myosin family. It in the C-terminal section; belongs to the chitin synthase family. Class V subfamily.

The protein localises to the cell membrane. The protein resides in the cell septum. It is found in the cell tip. The enzyme catalyses [(1-&gt;4)-N-acetyl-beta-D-glucosaminyl](n) + UDP-N-acetyl-alpha-D-glucosamine = [(1-&gt;4)-N-acetyl-beta-D-glucosaminyl](n+1) + UDP + H(+). Its function is as follows. Polymerizes chitin, a structural polymer of the cell wall and septum, by transferring the sugar moiety of UDP-GlcNAc to the non-reducing end of the growing chitin polymer. Important for hyphal growth and conidiophore development but not pathogenicity. The protein is Chitin synthase E of Aspergillus fumigatus (Neosartorya fumigata).